The primary structure comprises 692 residues: Ribonuclease R (692 aa).

Positions Arg-204–Leu-525 constitute an RNB domain. The region spanning Lys-563–Ile-648 is the S1 motif domain. The tract at residues Lys-651–Lys-692 is disordered. Residues Val-670–Lys-692 are compositionally biased toward basic residues.

Belongs to the RNR ribonuclease family. RNase R subfamily.

Its subcellular location is the cytoplasm. The catalysed reaction is Exonucleolytic cleavage in the 3'- to 5'-direction to yield nucleoside 5'-phosphates.. In terms of biological role, 3'-5' exoribonuclease that releases 5'-nucleoside monophosphates and is involved in maturation of structured RNAs. The chain is Ribonuclease R from Chlamydia muridarum (strain MoPn / Nigg).